A 620-amino-acid polypeptide reads, in one-letter code: Probable potassium transport system protein Kup (620 aa).

12 helical membrane passes run 11-31, 51-71, 100-120, 138-158, 167-187, 202-222, 246-266, 288-308, 334-354, 364-384, 396-416, and 418-438; these read LAFL…LYAF, ILSL…LLLV, IAML…VITP, LAPY…AVQA, FFAP…AHAI, AVHF…LVVL, WFAL…AYLL, LILL…SGIF, GQIY…FVML, AAYG…LVLV, VVTI…STST, and LMEG…VMYI.

It belongs to the HAK/KUP transporter (TC 2.A.72) family.

It localises to the cell inner membrane. The enzyme catalyses K(+)(in) + H(+)(in) = K(+)(out) + H(+)(out). In terms of biological role, transport of potassium into the cell. Likely operates as a K(+):H(+) symporter. The chain is Probable potassium transport system protein Kup from Vibrio cholerae serotype O1 (strain ATCC 39315 / El Tor Inaba N16961).